A 169-amino-acid chain; its full sequence is Probable glutathione peroxidase 2 (169 aa).

Residue Cys-41 is part of the active site.

It belongs to the glutathione peroxidase family. Interacts with DJ1A. Expressed in leaves, stems, flowers, green siliques and roots.

The protein resides in the cytoplasm. It localises to the cytosol. Its subcellular location is the nucleus. The catalysed reaction is 2 glutathione + H2O2 = glutathione disulfide + 2 H2O. Functionally, may constitute a glutathione peroxidase-like protective system against oxidative stresses. The protein is Probable glutathione peroxidase 2 (GPX2) of Arabidopsis thaliana (Mouse-ear cress).